The primary structure comprises 328 residues: GMP reductase (328 aa).

The Thioimidate intermediate role is filled by cysteine 176. An NADP(+)-binding site is contributed by 205–228; it reads IIADGGIRTHGDIAKSVRFGATMV.

This sequence belongs to the IMPDH/GMPR family. GuaC type 2 subfamily.

It catalyses the reaction IMP + NH4(+) + NADP(+) = GMP + NADPH + 2 H(+). In terms of biological role, catalyzes the irreversible NADPH-dependent deamination of GMP to IMP. It functions in the conversion of nucleobase, nucleoside and nucleotide derivatives of G to A nucleotides, and in maintaining the intracellular balance of A and G nucleotides. This is GMP reductase from Shouchella clausii (strain KSM-K16) (Alkalihalobacillus clausii).